The following is a 424-amino-acid chain: Pachytene checkpoint protein 2 homolog (424 aa).

Position 171 to 178 (171 to 178 (GPPGTGKT)) interacts with ATP.

Belongs to the AAA ATPase family. PCH2 subfamily.

Functionally, plays a key role in chromosome recombination and chromosome structure development during meiosis. Required at early steps in meiotic recombination that leads to non-crossovers pathways. Also needed for efficient completion of homologous synapsis by influencing crossover distribution along the chromosomes affecting both crossovers and non-crossovers pathways. The protein is Pachytene checkpoint protein 2 homolog (trip13) of Danio rerio (Zebrafish).